Here is a 209-residue protein sequence, read N- to C-terminus: Ribosomal RNA large subunit methyltransferase E (209 aa).

Residues Gly-63, Trp-65, Asp-83, Asp-99, and Asp-124 each contribute to the S-adenosyl-L-methionine site. Catalysis depends on Lys-164, which acts as the Proton acceptor.

The protein belongs to the class I-like SAM-binding methyltransferase superfamily. RNA methyltransferase RlmE family.

It localises to the cytoplasm. It catalyses the reaction uridine(2552) in 23S rRNA + S-adenosyl-L-methionine = 2'-O-methyluridine(2552) in 23S rRNA + S-adenosyl-L-homocysteine + H(+). Its function is as follows. Specifically methylates the uridine in position 2552 of 23S rRNA at the 2'-O position of the ribose in the fully assembled 50S ribosomal subunit. This chain is Ribosomal RNA large subunit methyltransferase E, found in Baumannia cicadellinicola subsp. Homalodisca coagulata.